Consider the following 243-residue polypeptide: MTNQQDTLFAEPGEHQGNFQFDSRVAGVFGDMIRRSVPGYTQIINTIGEIADRCVTPGSNVYDLGCSLGAATLAIRRKIEGRNARIFAIDNSEPMLVRAEENLSAYVSDTKVFFQLADIRDQTFENASLVVLNFTLQFLPPDDRDTLLARIYQGLNPGGILLLSEKLKFDGVDVQALLDSLHLDFKRANGYSELEISQKRSAIENVLIPDTLEQHKTRLNQAGFTQADLWFQCFNFASMVAIK.

S-adenosyl-L-methionine contacts are provided by residues tyrosine 40, 65–67, 90–91, 118–119, asparagine 133, and arginine 200; these read GCS, DN, and DI.

Belongs to the class I-like SAM-binding methyltransferase superfamily. Cx-SAM synthase family. As to quaternary structure, homodimer.

It carries out the reaction prephenate + S-adenosyl-L-methionine = carboxy-S-adenosyl-L-methionine + 3-phenylpyruvate + H2O. Functionally, catalyzes the conversion of S-adenosyl-L-methionine (SAM) to carboxy-S-adenosyl-L-methionine (Cx-SAM). This Shewanella amazonensis (strain ATCC BAA-1098 / SB2B) protein is Carboxy-S-adenosyl-L-methionine synthase.